Consider the following 314-residue polypeptide: Zinc transporter ZIP3 (314 aa).

At 1 to 3 (MVK) the chain is on the extracellular side. Residues 4–24 (LLVAKILCMVGVFFFMLLGSL) form a helical membrane-spanning segment. Topologically, residues 25–42 (LPVKIIETDFEKAHRSKK) are cytoplasmic. Residues 43–63 (ILSLCNTFGGGVFLATCFNAL) form a helical membrane-spanning segment. Residues 64 to 85 (LPAVREKLQKVLSLGHISTDYP) lie on the Extracellular side of the membrane. A helical membrane pass occupies residues 86 to 106 (LAETILLLGFFMTVFLEQLIL). Residues 107–169 (TFRKEKPSFI…QGLSRASPVR (63 aa)) are Cytoplasmic-facing. S125 and S129 each carry phosphoserine. The helical transmembrane segment at 170–190 (LLSLAFALSAHSVFEGLALGL) threads the bilayer. The Extracellular segment spans residues 191–196 (QEEGEK). A helical membrane pass occupies residues 197 to 217 (VVSLFVGVAVHETLVAVALGI). At 218 to 229 (SMARSAMPLRDA) the chain is on the cytoplasmic side. The helical transmembrane segment at 230 to 250 (AKLAVTVSAMIPLGIGLGLGI) threads the bilayer. Residues 251–262 (ESAQGVPGSVAS) lie on the Extracellular side of the membrane. A helical transmembrane segment spans residues 263-283 (VLLQGLAGGTFLFITFLEILA). At 284–292 (KELEEKSDR) the chain is on the cytoplasmic side. The chain crosses the membrane as a helical span at residues 293 to 313 (LLKVLFLVLGYTVLAGMVFLK). Residue W314 is a topological domain, extracellular.

This sequence belongs to the ZIP transporter (TC 2.A.5) family.

Its subcellular location is the cell membrane. It is found in the apical cell membrane. It catalyses the reaction Zn(2+)(in) = Zn(2+)(out). In terms of biological role, transporter for the divalent cation Zn(2+). Mediates the influx of Zn(2+) into cells from extracellular space. Controls Zn(2+) accumulation into dentate gyrus granule cells in the hippocampus. Mediates Zn(2+) reuptake from the secreted milk within the alveolar lumen. In Homo sapiens (Human), this protein is Zinc transporter ZIP3.